The following is a 247-amino-acid chain: Uridylate kinase (247 aa).

15–18 (KLSG) contacts ATP. The involved in allosteric activation by GTP stretch occupies residues 23–28 (GEEGFG). Glycine 57 lines the UMP pocket. Residues glycine 58 and arginine 62 each contribute to the ATP site. Residues aspartate 77 and 138-145 (TGNPFCTT) each bind UMP. ATP-binding residues include threonine 165, tyrosine 171, and aspartate 174.

It belongs to the UMP kinase family. As to quaternary structure, homohexamer.

Its subcellular location is the cytoplasm. It catalyses the reaction UMP + ATP = UDP + ADP. It participates in pyrimidine metabolism; CTP biosynthesis via de novo pathway; UDP from UMP (UMPK route): step 1/1. Allosterically activated by GTP. Inhibited by UTP. Its function is as follows. Catalyzes the reversible phosphorylation of UMP to UDP. This Shewanella loihica (strain ATCC BAA-1088 / PV-4) protein is Uridylate kinase.